The primary structure comprises 129 residues: MSNIPTELKYASSHEWIRKEEDGSYTVGITEHAQELLGDMVFVELPEVGDTVTAGEDCAVAESVKAASDIYAPISGEVIAVNEALEDSPELVNSSAYGEGWFFRVMPSDESEVDALLDAEGYQAVIDEE.

Positions 24 to 106 (SYTVGITEHA…YGEGWFFRVM (83 aa)) constitute a Lipoyl-binding domain. Lys-65 is modified (N6-lipoyllysine).

Belongs to the GcvH family. The glycine cleavage system is composed of four proteins: P, T, L and H. Requires (R)-lipoate as cofactor.

The glycine cleavage system catalyzes the degradation of glycine. The H protein shuttles the methylamine group of glycine from the P protein to the T protein. The protein is Glycine cleavage system H protein of Shewanella baltica (strain OS155 / ATCC BAA-1091).